Here is a 94-residue protein sequence, read N- to C-terminus: DNA-directed RNA polymerase subunit omega (94 aa).

It belongs to the RNA polymerase subunit omega family. In terms of assembly, the RNAP catalytic core consists of 2 alpha, 1 beta, 1 beta' and 1 omega subunit. When a sigma factor is associated with the core the holoenzyme is formed, which can initiate transcription.

It carries out the reaction RNA(n) + a ribonucleoside 5'-triphosphate = RNA(n+1) + diphosphate. Functionally, promotes RNA polymerase assembly. Latches the N- and C-terminal regions of the beta' subunit thereby facilitating its interaction with the beta and alpha subunits. The chain is DNA-directed RNA polymerase subunit omega from Frankia casuarinae (strain DSM 45818 / CECT 9043 / HFP020203 / CcI3).